Consider the following 312-residue polypeptide: Porphobilinogen deaminase (312 aa).

C243 carries the post-translational modification S-(dipyrrolylmethanemethyl)cysteine.

It belongs to the HMBS family. Monomer. The cofactor is dipyrromethane.

The catalysed reaction is 4 porphobilinogen + H2O = hydroxymethylbilane + 4 NH4(+). It participates in porphyrin-containing compound metabolism; protoporphyrin-IX biosynthesis; coproporphyrinogen-III from 5-aminolevulinate: step 2/4. Tetrapolymerization of the monopyrrole PBG into the hydroxymethylbilane pre-uroporphyrinogen in several discrete steps. The polypeptide is Porphobilinogen deaminase (Vibrio parahaemolyticus serotype O3:K6 (strain RIMD 2210633)).